The chain runs to 329 residues: Mas-related G-protein coupled receptor member X2 (329 aa).

At 1–33 (MDPTTPAWGTESTTMDGNDQSLPLLCDKEALIP) the chain is on the extracellular side. Residues 34–54 (VFLILFIALVGLVGNGFVLWL) traverse the membrane as a helical segment. The Cytoplasmic segment spans residues 55-63 (LGFRMSRNA). The helical transmembrane segment at 64 to 84 (FSVYVLSLAGADFLFLCFQII) threads the bilayer. The Extracellular portion of the chain corresponds to 85–96 (NCLVYLRDFFCS). Residues 97–117 (ISINFPSXFTTVMTCAYLAGL) traverse the membrane as a helical segment. At 118–144 (SMLSTISTERCLSVLWPIWYRCRRPRH) the chain is on the cytoplasmic side. Residues 145–165 (LSAVVCVLLWALSLLLSILEG) form a helical membrane-spanning segment. Topologically, residues 166–184 (KFCGFLFSDGDFGWCQIFD) are extracellular. A helical transmembrane segment spans residues 185–205 (FITAAWLIFLFVVLCASSLAL). Residues 206–228 (LVRILCGSRGLPLTRLYLTILLT) are Cytoplasmic-facing. Residues 229–249 (VLVFLLCGLPFGIQWFLILGF) traverse the membrane as a helical segment. Residues 250–263 (WNSDVLLCHIHLVS) are Extracellular-facing. A helical transmembrane segment spans residues 264-284 (VVLSSLNSSANPIIYFFVGSF). Topologically, residues 285 to 329 (RKQWRLQQPILKLAFQRALQDTAEVDHSEGCFPQGTSEMSRSSLV) are cytoplasmic.

Belongs to the G-protein coupled receptor 1 family. Mas subfamily.

The protein resides in the cell membrane. In terms of biological role, mast cell-specific receptor for basic secretagogues, i.e. cationic amphiphilic drugs, as well as endo- or exogenous peptides, consisting of a basic head group and a hydrophobic core. Recognizes and binds small molecules containing a cyclized tetrahydroisoquinoline (THIQ), such as non-steroidal neuromuscular blocking drugs (NMBDs), including tubocurarine and atracurium. In response to these compounds, mediates pseudo-allergic reactions characterized by histamine release, inflammation and airway contraction. The protein is Mas-related G-protein coupled receptor member X2 (MRGPRX2) of Hoolock hoolock (Western hoolock gibbon).